Reading from the N-terminus, the 536-residue chain is Phosphoenolpyruvate carboxykinase (ATP) (536 aa).

Residues arginine 62, tyrosine 203, and lysine 209 each contribute to the substrate site. ATP is bound by residues lysine 209, histidine 228, and 244–252 (GLSGTGKTT). 2 residues coordinate Mn(2+): lysine 209 and histidine 228. Residue aspartate 265 coordinates Mn(2+). Residues glutamate 293, arginine 329, 445 to 446 (RI), and threonine 451 contribute to the ATP site. Arginine 329 is a binding site for substrate.

It belongs to the phosphoenolpyruvate carboxykinase (ATP) family. As to quaternary structure, monomer. The cofactor is Mn(2+).

The protein localises to the cytoplasm. The catalysed reaction is oxaloacetate + ATP = phosphoenolpyruvate + ADP + CO2. The protein operates within carbohydrate biosynthesis; gluconeogenesis. In terms of biological role, involved in the gluconeogenesis. Catalyzes the conversion of oxaloacetate (OAA) to phosphoenolpyruvate (PEP) through direct phosphoryl transfer between the nucleoside triphosphate and OAA. This is Phosphoenolpyruvate carboxykinase (ATP) from Glaesserella parasuis serovar 5 (strain SH0165) (Haemophilus parasuis).